The following is a 1175-amino-acid chain: Phospholipid-transporting ATPase IF (1175 aa).

Helical transmembrane passes span 69 to 89, 91 to 111, 287 to 307, and 338 to 358; these read FYFLIIFLVQLMIDTPTSPIT, GLPLFFVITVTAIKQGYEDWL, NTFLIIYLIILISEAIISTIL, and FISDFLAFLVLYNFIIPISLY. Aspartate 407 serves as the catalytic 4-aspartylphosphate intermediate. ATP contacts are provided by aspartate 407, lysine 408, threonine 409, glutamate 530, phenylalanine 571, lysine 594, arginine 625, threonine 705, glycine 706, aspartate 707, arginine 793, and lysine 799. Aspartate 407 contacts Mg(2+). Residue threonine 409 participates in Mg(2+) binding. Aspartate 820 is a binding site for Mg(2+). Residues asparagine 823 and aspartate 824 each coordinate ATP. Aspartate 824 serves as a coordination point for Mg(2+). 6 helical membrane-spanning segments follow: residues 862–882, 910–930, 963–983, 994–1014, 1033–1053, and 1060–1080; these read LLFVHGHFYYIRIATLVQYFF, VYLTLYNICFTSLPVLIYSLV, WTVLGFSHAFIFFFGSYFLVG, MFGNWTFGTLVFTVMVITVTV, GSIIFYFIFSLFYGGILWPFL, and FVFIQLLSSGSAWFAILLMVV.

This sequence belongs to the cation transport ATPase (P-type) (TC 3.A.3) family. Type IV subfamily. As to quaternary structure, component of a P4-ATPase flippase complex which consists of a catalytic alpha subunit ATP11B and an accessory beta subunit TMEM30A. Mg(2+) is required as a cofactor. In terms of tissue distribution, expressed in retina, brain, liver, testes and kidney (at protein level).

The protein localises to the recycling endosome membrane. It is found in the early endosome. Its subcellular location is the endoplasmic reticulum. The protein resides in the golgi apparatus. It localises to the trans-Golgi network. The enzyme catalyses ATP + H2O + phospholipidSide 1 = ADP + phosphate + phospholipidSide 2.. The catalysed reaction is a 1,2-diacyl-sn-glycero-3-phospho-L-serine(out) + ATP + H2O = a 1,2-diacyl-sn-glycero-3-phospho-L-serine(in) + ADP + phosphate + H(+). It catalyses the reaction a 1,2-diacyl-sn-glycero-3-phosphoethanolamine(out) + ATP + H2O = a 1,2-diacyl-sn-glycero-3-phosphoethanolamine(in) + ADP + phosphate + H(+). Catalytic component of a P4-ATPase flippase complex which catalyzes the hydrolysis of ATP coupled to the transport of aminophospholipids, phosphatidylserines (PS) and phosphatidylethanolamines (PE), from the outer to the inner leaflet of intracellular membranes. May contribute to the maintenance of membrane lipid asymmetry in endosome compartment. The protein is Phospholipid-transporting ATPase IF of Mus musculus (Mouse).